The primary structure comprises 208 residues: 3-isopropylmalate dehydratase small subunit (208 aa).

This sequence belongs to the LeuD family. LeuD type 1 subfamily. Heterodimer of LeuC and LeuD.

It carries out the reaction (2R,3S)-3-isopropylmalate = (2S)-2-isopropylmalate. It participates in amino-acid biosynthesis; L-leucine biosynthesis; L-leucine from 3-methyl-2-oxobutanoate: step 2/4. In terms of biological role, catalyzes the isomerization between 2-isopropylmalate and 3-isopropylmalate, via the formation of 2-isopropylmaleate. This is 3-isopropylmalate dehydratase small subunit (leuD) from Cupriavidus necator (Alcaligenes eutrophus).